We begin with the raw amino-acid sequence, 129 residues long: Small ribosomal subunit protein uS11 (129 aa).

Positions 108–129 are disordered; sequence TPIPHNGTRPPKRVLKRLRLKK. The span at 117 to 129 shows a compositional bias: basic residues; it reads PPKRVLKRLRLKK.

The protein belongs to the universal ribosomal protein uS11 family. Part of the 30S ribosomal subunit. Interacts with proteins S7 and S18. Binds to IF-3.

Functionally, located on the platform of the 30S subunit, it bridges several disparate RNA helices of the 16S rRNA. Forms part of the Shine-Dalgarno cleft in the 70S ribosome. The sequence is that of Small ribosomal subunit protein uS11 from Mycoplasmopsis synoviae (strain 53) (Mycoplasma synoviae).